Here is a 79-residue protein sequence, read N- to C-terminus: Conotoxin VnMKLT1-01121 (79 aa).

The first 22 residues, 1 to 22, serve as a signal peptide directing secretion; it reads MKLTCMMIVAVLFLTAWTFVTA. Residues 23–48 constitute a propeptide that is removed on maturation; sequence DDSRNGLEYLFPKAHYEMNPEASKLN. 3 disulfide bridges follow: Cys-53/Cys-70, Cys-60/Cys-74, and Cys-69/Cys-78.

Belongs to the conotoxin O1 superfamily. In terms of tissue distribution, expressed by the venom duct.

The protein localises to the secreted. This chain is Conotoxin VnMKLT1-01121, found in Conus ventricosus (Mediterranean cone).